The sequence spans 144 residues: MKSKTKTRRKAREYAVQALYSWQISKNDIYDVINHFKKNKTINEIDQIYFYELIIGITKNLKYLDELMRPYLSRTIQELGQIEKAILRISFFELDKRYDIPFKVTINESIELAKLFGAKDSHKFINGVLDKASLKLRKNNSNKN.

Belongs to the NusB family.

Involved in transcription antitermination. Required for transcription of ribosomal RNA (rRNA) genes. Binds specifically to the boxA antiterminator sequence of the ribosomal RNA (rrn) operons. The protein is Transcription antitermination protein NusB of Buchnera aphidicola subsp. Baizongia pistaciae (strain Bp).